Consider the following 499-residue polypeptide: Alpha-L-arabinofuranosidase B (499 aa).

A signal peptide spans 1-17 (MFSRRNLLALGLAATVS). Residues 18–335 (AGPCDIYEAG…ENIVAAKYVV (318 aa)) are catalytic. 3 disulfide bridges follow: Cys21–Cys31, Cys81–Cys86, and Cys176–Cys177. An N-linked (GlcNAc...) asparagine glycan is attached at Asn83. An N-linked (GlcNAc...) asparagine glycan is attached at Asn202. Asp219 provides a ligand contact to substrate. Catalysis depends on Glu221, which acts as the Nucleophile. 3 residues coordinate substrate: Asn222, Asn223, and Gly296. The active-site Proton donor is the Asp297. The ABD stretch occupies residues 336-499 (GSLVSGPSFT…SFEIETAFAS (164 aa)). Cys401 and Cys439 are joined by a disulfide. Residues His416, Asn418, Phe419, Asp435, His463, Glu465, Leu468, and Asp488 each contribute to the substrate site.

It belongs to the glycosyl hydrolase 54 family.

It is found in the secreted. It catalyses the reaction Hydrolysis of terminal non-reducing alpha-L-arabinofuranoside residues in alpha-L-arabinosides.. It functions in the pathway glycan metabolism; L-arabinan degradation. Alpha-L-arabinofuranosidase involved in the degradation of arabinoxylan, a major component of plant hemicellulose. Able to hydrolyze 1,5-, 1,3- and 1,2-alpha-linkages not only in L-arabinofuranosyl oligosaccharides, but also in polysaccharides containing terminal non-reducing L-arabinofuranoses in side chains, like L-arabinan, arabinogalactan and arabinoxylan. This chain is Alpha-L-arabinofuranosidase B (abfB), found in Aspergillus kawachii (strain NBRC 4308) (White koji mold).